A 603-amino-acid chain; its full sequence is MRFLLTKRAFRIFNPRFQRLWLTSSPFSSTSNSGGFPDDSEPESWRTIEGLLRSPANFSPLSPITFLERSAKVYRDRTSLVFGSVKHTWFQTYQRCLRLASALTNLGISRGDVVAALAPNVPAMHELHFAVPMAGLILCPLNTRLDPSTLSVLLAHSEAKILFVDHQLLEIAHGALDLLAKSDKTRKSLKLVLISQSNDDDDSDEDSSSTFASKYSFDYEYETLLKSGDSEFEIIKPRCEWDPISINYTSGTTSRPKGVVYSHRGAYLNSLATVFLHQMSVYPVYLWTVPMFHCNGWCLVWGVAAQGGTNICLRKVSPKMIFKNIAMHKVTHMGGAPTVLNMIVNYTVTEHKPLPHRVEIMTGGSPPLPQILAKMEELGFNVSHLYGLTETYGPGTHCVWKPEWDSLSLEERTKLKARQGVQHLGLEGLDVKDPLTMETVPDDGLTMGEVMFRGNTVMSGYFKDIEATRKAFEGDWFHSGDLAVKYPDGYIEIKDRLKDVIISGGENISSVEVERVLCSHQAVLEAAVVARPDHHWGQTPCGFVKLKEGFDTIKPEEIIGFCRDHLPHYMAPKTIVFGDIPKTSTGKVQKYLLRKKADEMGSL.

Belongs to the ATP-dependent AMP-binding enzyme family. As to expression, expressed at low levels in leaves, flowers and developing seeds.

The catalysed reaction is 3-methylbutanoate + ATP + CoA = 3-methylbutanoyl-CoA + AMP + diphosphate. The enzyme catalyses hexanoate + ATP + CoA = hexanoyl-CoA + AMP + diphosphate. It catalyses the reaction butanoate + ATP + CoA = butanoyl-CoA + AMP + diphosphate. It carries out the reaction pentanoate + ATP + CoA = pentanoyl-CoA + AMP + diphosphate. The catalysed reaction is 3-methylpentanoate + ATP + CoA = 3-methylpentanoyl-CoA + AMP + diphosphate. The enzyme catalyses 4-methylpentanoate + ATP + CoA = 4-methylpentanoyl-CoA + AMP + diphosphate. Its function is as follows. Catalyzes the ligation of CoA on isovalerate to produce 3-methylbutanoyl-CoA. Can also use butanoate, pentanoate, hexanoate, 3-methylpentanoate and 4-methylpentanoate as substrates with a lower efficiency. This is Isovalerate--CoA ligase AAE2 from Arabidopsis thaliana (Mouse-ear cress).